Reading from the N-terminus, the 240-residue chain is Adiponectin (240 aa).

The signal sequence occupies residues 1–17 (MLLQGALLLLLALPSHG). Residue Lys-28 is modified to 5-hydroxylysine. O-linked (Gal...) hydroxylysine glycosylation is present at Lys-28. The segment at 29 to 100 (GACAGWMAGI…GTPGRKGEPG (72 aa)) is disordered. Cys-31 is modified (S-(2-succinyl)cysteine). A 4-hydroxyproline mark is found at Pro-39, Pro-42, and Pro-48. Positions 43 to 102 (GHNGTPGRDGRDGTPGEKGEKGDPGLVGPKGDTGETGITGIEGPRGFPGTPGRKGEPGES) constitute a Collagen-like domain. Residues 50–65 (RDGRDGTPGEKGEKGD) show a composition bias toward basic and acidic residues. Residues Lys-60, Lys-63, and Lys-72 each carry the 5-hydroxylysine modification. O-linked (Gal...) hydroxylysine glycans are attached at residues Lys-60, Lys-63, and Lys-72. A 4-hydroxyproline modification is found at Pro-86. Lys-96 is subject to 5-hydroxylysine. Lys-96 carries an O-linked (Gal...) hydroxylysine glycan. The 138-residue stretch at 103-240 (AYVYRSAFSV…GFLLYHNIVE (138 aa)) folds into the C1q domain.

As to quaternary structure, homomultimer. Forms trimers, hexamers and 12- to 18-mers. The trimers (low molecular weight complexes / LMW) are assembled via non-covalent interactions of the collagen-like domains in a triple helix and hydrophobic interactions within the globular C1q domain. Several trimers can associate to form disulfide-linked hexamers (middle molecular weight complexes / MMW) and larger complexes (higher molecular weight / HMW). The HMW-complex assembly is also modulated by the degree of lysine hydroxylation and glycosylation. LMW, MMW and HMW complexes bind to HBEGF, MMW and HMW complexes bind to PDGFB, and HMW complex binds to FGF2. Interacts with CTRP9 via the C1q domain (heterotrimeric complex). HMW complexes are more extensively glycosylated than smaller oligomers. Hydroxylation and glycosylation of the lysine residues within the collagen-like domain of adiponectin seem to be critically involved in regulating the formation and/or secretion of HMW complexes and consequently contribute to the insulin-sensitizing activity of adiponectin in hepatocytes. In terms of processing, O-glycosylated. O-linked glycans on hydroxylysine residues consist of Glc-Gal disaccharides bound to the oxygen atom of post-translationally added hydroxyl groups. O-linked glycosylations elsewhere disialylated with the structure Neu5Acalpha2-&gt;8Neu5Acalpha2-&gt;3Gal. Sialylated by alpha 2,8-sialyltransferase III. Desialylated forms are rapidly cleared from the circulation. Not N-glycosylated. Post-translationally, succination of Cys-31 by the Krebs cycle intermediate fumarate, which leads to S-(2-succinyl)cysteine residues, inhibits polymerization and secretion of adiponectin. Adiponectin is a major target for succination in both adipocytes and adipose tissue of diabetic mammals. It was proposed that succination of proteins is a biomarker of mitochondrial stress and accumulation of Krebs cycle intermediates in adipose tissue in diabetes and that succination of adiponectin may contribute to the decrease in plasma adiponectin in diabetes.

The protein localises to the secreted. Polymerization and secretion of adiponectin is inhibited by succination of cysteine residues by the Krebs cycle intermediate fumarate, which leads to S-(2-succinyl)cysteine residues. Its function is as follows. Important adipokine involved in the control of fat metabolism and insulin sensitivity, with direct anti-diabetic, anti-atherogenic and anti-inflammatory activities. Stimulates AMPK phosphorylation and activation in the liver and the skeletal muscle, enhancing glucose utilization and fatty-acid combustion. Antagonizes TNF-alpha by negatively regulating its expression in various tissues such as liver and macrophages, and also by counteracting its effects. Inhibits endothelial NF-kappa-B signaling through a cAMP-dependent pathway. May play a role in cell growth, angiogenesis and tissue remodeling by binding and sequestering various growth factors with distinct binding affinities, depending on the type of complex, LMW, MMW or HMW. The protein is Adiponectin (ADIPOQ) of Bos taurus (Bovine).